Here is a 290-residue protein sequence, read N- to C-terminus: Mitochondrial dicarboxylate carrier (290 aa).

Solcar repeat units follow at residues 6–90 (TKRL…VKKQ), 101–188 (QKAL…IKQT), and 197–281 (DNLQ…LRLK). Helical transmembrane passes span 12–32 (WYFG…LDLL), 65–84 (GVSA…FGIY), and 103–123 (ALLA…GDLV). N6-acetyllysine is present on K159. The next 3 helical transmembrane spans lie at 163–182 (GATM…LSFY), 203–223 (FASS…LDVM), and 256–276 (GFIP…IFFE).

It belongs to the mitochondrial carrier (TC 2.A.29) family.

It localises to the mitochondrion inner membrane. It catalyses the reaction (S)-malate(in) + phosphate(out) = (S)-malate(out) + phosphate(in). It carries out the reaction malonate(out) + (S)-malate(in) = malonate(in) + (S)-malate(out). The catalysed reaction is (S)-malate(in) + succinate(out) = (S)-malate(out) + succinate(in). The enzyme catalyses (S)-malate(in) + sulfate(out) = (S)-malate(out) + sulfate(in). It catalyses the reaction 2 thiosulfate(out) + (S)-malate(in) = 2 thiosulfate(in) + (S)-malate(out). It carries out the reaction malonate(out) + phosphate(in) = malonate(in) + phosphate(out). The catalysed reaction is succinate(out) + phosphate(in) = succinate(in) + phosphate(out). The enzyme catalyses sulfate(out) + phosphate(in) = sulfate(in) + phosphate(out). It catalyses the reaction 2 thiosulfate(out) + phosphate(in) = 2 thiosulfate(in) + phosphate(out). It carries out the reaction malonate(out) + succinate(in) = malonate(in) + succinate(out). Functionally, catalyzes the electroneutral exchange or flux of physiologically important metabolites such as dicarboxylates (malonate, malate, succinate), inorganic sulfur-containing anions, and phosphate, across mitochondrial inner membrane. Plays an important role in gluconeogenesis, fatty acid metabolism, urea synthesis, and sulfur metabolism, by supplying the substrates for the different metabolic processes. The sequence is that of Mitochondrial dicarboxylate carrier from Caenorhabditis elegans.